A 259-amino-acid polypeptide reads, in one-letter code: Pycsar effector protein RsmPycTIR (259 aa).

Residue 1–120 coordinates a nucleoside 3',5'-cyclic phosphate; the sequence is MVGGDEVIAN…RRVHEDFSGR (120 aa). The TIR-like stretch occupies residues 126 to 229; sequence LATGISRRTS…AEFQYQISSS (104 aa). 3 helical membrane-spanning segments follow: residues 136-156, 169-189, and 234-254; these read GWNW…AIWY, VLLP…ADPV, and QATA…LFWI.

The protein localises to the cell inner membrane. It carries out the reaction NAD(+) + H2O = ADP-D-ribose + nicotinamide + H(+). Pycsar (pyrimidine cyclase system for antiphage resistance) provides immunity against bacteriophage. The pyrimidine cyclase (PycC) synthesizes cyclic nucleotides in response to infection; these serve as specific second messenger signals. The signals activate the adjacent effector, leading to bacterial cell death and abortive phage infection. A clade B Pycsar system. Functionally, the effector gene of a two-gene Pycsar system. Expression of this and adjacent uridylate cyclase RsmPycC (AC A0A1V0HUX5) probably confers resistance to bacteriophage. The genes are probably only expressed in response to bacteriophage infection. Probably only responds to cUMP (produced by its cognate NTP cyclase), it may act by degrading NAD(+) and/or by impairing membrane integrity. The chain is Pycsar effector protein RsmPycTIR from Rhodovulum sp. (strain MB263).